A 146-amino-acid polypeptide reads, in one-letter code: Transcriptional regulator MraZ (146 aa).

2 consecutive SpoVT-AbrB domains span residues 5–47 (EYYH…TITD) and 76–119 (SVQV…AKER).

The protein belongs to the MraZ family. Forms oligomers.

Its subcellular location is the cytoplasm. The protein localises to the nucleoid. The sequence is that of Transcriptional regulator MraZ from Dictyoglomus turgidum (strain DSM 6724 / Z-1310).